The chain runs to 173 residues: Nanos homolog 3 (173 aa).

Residues 23-51 (KEGPETRLSPQPEPEPMLEPDQKRSLESS) form a disordered region. A Nanos-type zinc finger spans residues 57-111 (LCSFCKHNGESRAIYQSHVLKDEAGRVLCPILRDYVCPQCGATRERAHTRRFCPL). Zn(2+)-binding residues include C58, C61, H74, C85, C93, C96, H104, and C109. 2 consecutive short sequence motifs (C2HC) follow at residues 58–85 (CSFC…RVLC) and 93–109 (CPQC…RRFC). The interval 123-173 (TTRNSAGKKLVRPDKAKTQDTGHRRGGGGGAGFRGAGKSEPSPSCSPSMST) is disordered. A compositionally biased stretch (basic and acidic residues) spans 133–145 (VRPDKAKTQDTGH). Positions 161–173 (SEPSPSCSPSMST) are enriched in low complexity.

The protein belongs to the nanos family. As to quaternary structure, binds mRNA from germ cells. Interacts with PUM2. As to expression, ovary, testis and brain (at protein level). In the ovaries, expressed during multiple stages of oogenesis, including primordial, primary, secondary and antral follicles with the highest expression in the oocytes. In the testis, expressed in germ cells, type A spermatogonia (SA), primary spermatocytes (S1), round spermatids (S3) and elongated spermatids.

It localises to the nucleus. The protein resides in the cytoplasm. Its subcellular location is the stress granule. The protein localises to the P-body. Plays a role in the maintenance of the undifferentiated state of germ cells regulating the spermatogonia cell cycle and inducing a prolonged transit in G1 phase. Affects cell proliferation probably by repressing translation of specific mRNAs. Maintains the germ cell lineage by suppressing both Bax-dependent and -independent apoptotic pathways. Essential in the early stage embryo to protect the migrating primordial germ cells (PGCs) from apoptosis. This chain is Nanos homolog 3 (NANOS3), found in Homo sapiens (Human).